The sequence spans 160 residues: SsrA-binding protein (160 aa).

Belongs to the SmpB family.

Its subcellular location is the cytoplasm. Functionally, required for rescue of stalled ribosomes mediated by trans-translation. Binds to transfer-messenger RNA (tmRNA), required for stable association of tmRNA with ribosomes. tmRNA and SmpB together mimic tRNA shape, replacing the anticodon stem-loop with SmpB. tmRNA is encoded by the ssrA gene; the 2 termini fold to resemble tRNA(Ala) and it encodes a 'tag peptide', a short internal open reading frame. During trans-translation Ala-aminoacylated tmRNA acts like a tRNA, entering the A-site of stalled ribosomes, displacing the stalled mRNA. The ribosome then switches to translate the ORF on the tmRNA; the nascent peptide is terminated with the 'tag peptide' encoded by the tmRNA and targeted for degradation. The ribosome is freed to recommence translation, which seems to be the essential function of trans-translation. The polypeptide is SsrA-binding protein (Pasteurella multocida (strain Pm70)).